Consider the following 892-residue polypeptide: Inner centromere protein B (892 aa).

Disordered regions lie at residues 50–124 (AEPE…KRMT), 160–182 (EHER…EMKT), 255–286 (LVNE…SLVV), 305–470 (KRES…PPPH), 502–555 (KRNT…RRED), 569–687 (QLEE…RERE), 702–760 (ERAA…AAAA), and 797–819 (NYGM…KPIP). Over residues 60–69 (SQKRRRKKRT) the composition is skewed to basic residues. Positions 90–99 (SANWSSSVRR) are enriched in low complexity. The span at 259 to 272 (QPLNLSNESATPTG) shows a compositional bias: polar residues. Residues 305–315 (KRESMTREAVR) are compositionally biased toward basic and acidic residues. Residues 316–326 (KSIRQSISKKK) are compositionally biased toward basic residues. Low complexity predominate over residues 332-343 (SSTSSQRSCHSS). Positions 431–444 (RAVDELSDDERPSE) are enriched in basic and acidic residues. Over residues 455 to 470 (PSPPCPPSKIVKPPPH) the composition is skewed to pro residues. Composition is skewed to basic and acidic residues over residues 509-555 (PDPK…RRED), 569-602 (QLEE…EEKA), 609-687 (KKQE…RERE), and 702-754 (ERAA…KAKE). The SAH stretch occupies residues 512–725 (KSEEKERQRL…EERKKREQQQ (214 aa)). The IN box stretch occupies residues 802 to 876 (LNSDDSTDDE…RTSSAVWHSP (75 aa)). S869 and S870 each carry phosphoserine.

Belongs to the INCENP family. In terms of assembly, component of the CPC at least composed of survivin/birc5, incenp, cdca8/borealin and/or cdca9/dasra-A, and aurkb/aurora-B. Interacts (via C-terminus) with aurkb (via N-terminus and kinase domain). Interacts (via N-terminus) with birc5.1, birc5.2, cdca8 and cdca9. Interacts with mtus1.

Its subcellular location is the nucleus. It is found in the chromosome. The protein resides in the centromere. It localises to the cytoplasm. The protein localises to the cytoskeleton. Its subcellular location is the spindle. It is found in the midbody. The protein resides in the kinetochore. Functionally, component of the chromosomal passenger complex (CPC), a complex that acts as a key regulator of mitosis. The CPC complex has essential functions at the centromere in ensuring correct chromosome alignment and segregation and is required for chromatin-induced microtubule stabilization and spindle assembly. Acts as a scaffold regulating CPC localization and activity. The C-terminus associates with aurkb/aurora-B, the N-terminus associated with cdca8/borealin and/or cdca9/dasra-A tethers the CPC to the inner centromere, and the microtubule binding activity within the central SAH domain directs aurkb/aurora-B toward substrates near microtubules. Activates aurkb. This Xenopus laevis (African clawed frog) protein is Inner centromere protein B (incenp-b).